Reading from the N-terminus, the 338-residue chain is Ornithine carbamoyltransferase (338 aa).

Carbamoyl phosphate-binding positions include 56–59 (STRT), Arg107, and 134–137 (HPTQ). Residues Asn168, Asp232, and 236–237 (SM) each bind L-ornithine. Residues 274-275 (CL) and Arg320 contribute to the carbamoyl phosphate site.

It belongs to the aspartate/ornithine carbamoyltransferase superfamily. OTCase family.

The protein resides in the cytoplasm. The catalysed reaction is carbamoyl phosphate + L-ornithine = L-citrulline + phosphate + H(+). It participates in amino-acid biosynthesis; L-arginine biosynthesis; L-arginine from L-ornithine and carbamoyl phosphate: step 1/3. Reversibly catalyzes the transfer of the carbamoyl group from carbamoyl phosphate (CP) to the N(epsilon) atom of ornithine (ORN) to produce L-citrulline. This chain is Ornithine carbamoyltransferase (argI), found in Buchnera aphidicola subsp. Schizaphis graminum (strain Sg).